A 274-amino-acid chain; its full sequence is Undecaprenyl-diphosphatase 1 (274 aa).

Helical transmembrane passes span 8 to 28 (WLLI…PIPV), 45 to 65 (IEGL…VIAI), 92 to 112 (FRIS…ALLF), 120 to 140 (LKQL…LWLI), 195 to 215 (FSFF…ISDI), 230 to 250 (IAFI…MNIM), and 253 to 273 (GKLI…LSLL).

It belongs to the UppP family.

It is found in the cell membrane. The enzyme catalyses di-trans,octa-cis-undecaprenyl diphosphate + H2O = di-trans,octa-cis-undecaprenyl phosphate + phosphate + H(+). Its function is as follows. Catalyzes the dephosphorylation of undecaprenyl diphosphate (UPP). Confers resistance to bacitracin. The protein is Undecaprenyl-diphosphatase 1 of Halalkalibacterium halodurans (strain ATCC BAA-125 / DSM 18197 / FERM 7344 / JCM 9153 / C-125) (Bacillus halodurans).